The primary structure comprises 52 residues: DNA-directed RNA polymerase subunit Rpo12 (52 aa).

Positions 13, 30, and 33 each coordinate Zn(2+).

This sequence belongs to the archaeal Rpo12/eukaryotic RPC10 RNA polymerase subunit family. Part of the RNA polymerase complex. Zn(2+) is required as a cofactor.

The protein resides in the cytoplasm. The catalysed reaction is RNA(n) + a ribonucleoside 5'-triphosphate = RNA(n+1) + diphosphate. Functionally, DNA-dependent RNA polymerase (RNAP) catalyzes the transcription of DNA into RNA using the four ribonucleoside triphosphates as substrates. This chain is DNA-directed RNA polymerase subunit Rpo12, found in Pyrobaculum neutrophilum (strain DSM 2338 / JCM 9278 / NBRC 100436 / V24Sta) (Thermoproteus neutrophilus).